A 387-amino-acid chain; its full sequence is Phosphoglycerate kinase (387 aa).

Residues 21–23, Arg-36, 59–62, Arg-113, and Arg-146 each bind substrate; these read DLN and HLGR. ATP is bound by residues Lys-197, Glu-314, and 340–343; that span reads GGDT.

Belongs to the phosphoglycerate kinase family. As to quaternary structure, monomer.

The protein resides in the cytoplasm. The catalysed reaction is (2R)-3-phosphoglycerate + ATP = (2R)-3-phospho-glyceroyl phosphate + ADP. It participates in carbohydrate degradation; glycolysis; pyruvate from D-glyceraldehyde 3-phosphate: step 2/5. The protein is Phosphoglycerate kinase of Pseudomonas entomophila (strain L48).